The following is a 212-amino-acid chain: Histone H1.2 (212 aa).

Low complexity predominate over residues 1–17 (MSEAAPAAPAAAPPAEK). The interval 1-41 (MSEAAPAAPAAAPPAEKAPAKKKAAKKPAGVRRKASGPPVS) is disordered. At S2 the chain carries N-acetylserine. Phosphoserine is present on S2. The residue at position 17 (K17) is an N6-acetyllysine. Basic residues predominate over residues 20-35 (AKKKAAKKPAGVRRKA). Residues K23, K26, and K27 each carry the N6-(2-hydroxyisobutyryl)lysine modification. K34 carries the post-translational modification N6-(beta-hydroxybutyryl)lysine; alternate. Residue K34 is modified to N6-crotonyllysine; alternate. The residue at position 34 (K34) is an N6-methyllysine; alternate. Residues 36 to 109 (SGPPVSELIT…GASGSFKLNK (74 aa)) enclose the H15 domain. K46 is modified (N6-(2-hydroxyisobutyryl)lysine). Residue K52 is modified to N6-(beta-hydroxybutyryl)lysine; alternate. Residue K52 is modified to N6-(2-hydroxyisobutyryl)lysine; alternate. Position 54 is a citrulline (R54). K63 is subject to N6-(2-hydroxyisobutyryl)lysine. An N6-(beta-hydroxybutyryl)lysine; alternate modification is found at K64. At K64 the chain carries N6-crotonyllysine; alternate. K64 carries the post-translational modification N6-(2-hydroxyisobutyryl)lysine; alternate. An N6-(2-hydroxyisobutyryl)lysine mark is found at K75 and K81. 2 positions are modified to N6-(beta-hydroxybutyryl)lysine; alternate: K85 and K90. An N6-crotonyllysine; alternate mark is found at K85, K90, and K97. 3 positions are modified to N6-(2-hydroxyisobutyryl)lysine; alternate: K85, K90, and K97. An N6-succinyllysine; alternate modification is found at K97. The tract at residues 98–212 (GTGASGSFKL…KAKKVAAKKK (115 aa)) is disordered. S104 carries the post-translational modification Phosphoserine; by PKC. K106 is subject to N6-(beta-hydroxybutyryl)lysine. 5 positions are modified to N6-(2-hydroxyisobutyryl)lysine: K110, K117, K121, K129, and K136. A compositionally biased stretch (low complexity) spans 121–148 (KKAGAAKAKKPAGAAKKPKKATGAATPK). A Phosphothreonine modification is found at T146. K148 is subject to N6-(2-hydroxyisobutyryl)lysine. Basic residues predominate over residues 149 to 160 (KAAKKTPKKAKK). An N6-crotonyllysine; alternate mark is found at K159 and K168. 2 positions are modified to N6-(2-hydroxyisobutyryl)lysine; alternate: K159 and K168. A compositionally biased stretch (basic residues) spans 169–212 (KVAKSPKKAKVTKPKKVKSASKAVKPKAAKPKVAKAKKVAAKKK). K186 is subject to N6-methyllysine; by EHMT1 and EHMT2. ADP-ribosylserine is present on S187. Position 212 is an N6-(2-hydroxyisobutyryl)lysine (K212).

It belongs to the histone H1/H5 family. As to quaternary structure, interacts with TSC22D1 isoform 2. Post-translationally, H1 histones are progressively phosphorylated during the cell cycle, becoming maximally phosphorylated during late G2 phase and M phase, and being dephosphorylated sharply thereafter. In terms of processing, crotonylation (Kcr) is specifically present in male germ cells and marks testis-specific genes in post-meiotic cells, including X-linked genes that escape sex chromosome inactivation in haploid cells. Crotonylation marks active promoters and enhancers and confers resistance to transcriptional repressors. It is also associated with post-meiotically activated genes on autosomes. ADP-ribosylated on Ser-187 in response to DNA damage. Post-translationally, citrullination at Arg-54 (H1R54ci) by PADI4 takes place within the DNA-binding site of H1 and results in its displacement from chromatin and global chromatin decondensation, thereby promoting pluripotency and stem cell maintenance. In terms of processing, hydroxybutyrylation of histones is induced by starvation.

The protein localises to the nucleus. It localises to the chromosome. Functionally, histone H1 protein binds to linker DNA between nucleosomes forming the macromolecular structure known as the chromatin fiber. Histones H1 are necessary for the condensation of nucleosome chains into higher-order structured fibers. Also acts as a regulator of individual gene transcription through chromatin remodeling, nucleosome spacing and DNA methylation. This is Histone H1.2 from Mus musculus (Mouse).